We begin with the raw amino-acid sequence, 256 residues long: uncharacterized protein (256 aa).

The N-terminal stretch at 1–22 is a signal peptide; sequence MGYLKRIGMCISLLIVIIFVTS. A lipid anchor (N-palmitoyl cysteine) is attached at Cys23. The S-diacylglycerol cysteine moiety is linked to residue Cys23.

It belongs to the staphylococcal tandem lipoprotein family.

Its subcellular location is the cell membrane. This is an uncharacterized protein from Staphylococcus aureus (strain MRSA252).